Reading from the N-terminus, the 356-residue chain is UDP-N-acetylglucosamine--N-acetylmuramyl-(pentapeptide) pyrophosphoryl-undecaprenol N-acetylglucosamine transferase (356 aa).

2 residues coordinate UDP-N-acetyl-alpha-D-glucosamine: Ser198 and Gln289.

It belongs to the glycosyltransferase 28 family. MurG subfamily.

The protein resides in the cell membrane. It carries out the reaction Mur2Ac(oyl-L-Ala-gamma-D-Glu-L-Lys-D-Ala-D-Ala)-di-trans,octa-cis-undecaprenyl diphosphate + UDP-N-acetyl-alpha-D-glucosamine = beta-D-GlcNAc-(1-&gt;4)-Mur2Ac(oyl-L-Ala-gamma-D-Glu-L-Lys-D-Ala-D-Ala)-di-trans,octa-cis-undecaprenyl diphosphate + UDP + H(+). Its pathway is cell wall biogenesis; peptidoglycan biosynthesis. Cell wall formation. Catalyzes the transfer of a GlcNAc subunit on undecaprenyl-pyrophosphoryl-MurNAc-pentapeptide (lipid intermediate I) to form undecaprenyl-pyrophosphoryl-MurNAc-(pentapeptide)GlcNAc (lipid intermediate II). This chain is UDP-N-acetylglucosamine--N-acetylmuramyl-(pentapeptide) pyrophosphoryl-undecaprenol N-acetylglucosamine transferase, found in Streptococcus thermophilus (strain ATCC BAA-491 / LMD-9).